We begin with the raw amino-acid sequence, 93 residues long: Beta-defensin 128 (93 aa).

The signal sequence occupies residues M1–G18. 3 cysteine pairs are disulfide-bonded: C24/C52, C32/C46, and C36/C53.

The protein belongs to the beta-defensin family.

The protein resides in the secreted. Its function is as follows. Has antibacterial activity. In Pongo pygmaeus (Bornean orangutan), this protein is Beta-defensin 128 (DEFB128).